The primary structure comprises 204 residues: Holliday junction branch migration complex subunit RuvA (204 aa).

Positions 1 to 64 are domain I; the sequence is MIGRLQGILL…EDAHLLFGFA (64 aa). The interval 65–143 is domain II; it reads QKTDRTLFRE…GVKQSDFFVE (79 aa). The tract at residues 144-155 is flexible linker; it reads STHIPLSPSIES. A domain III region spans residues 156 to 204; sequence HSESSSDEAISALIALGYKPVEAEKMVKRVAKPELTSEQVIREALKAAL.

This sequence belongs to the RuvA family. As to quaternary structure, homotetramer. Forms an RuvA(8)-RuvB(12)-Holliday junction (HJ) complex. HJ DNA is sandwiched between 2 RuvA tetramers; dsDNA enters through RuvA and exits via RuvB. An RuvB hexamer assembles on each DNA strand where it exits the tetramer. Each RuvB hexamer is contacted by two RuvA subunits (via domain III) on 2 adjacent RuvB subunits; this complex drives branch migration. In the full resolvosome a probable DNA-RuvA(4)-RuvB(12)-RuvC(2) complex forms which resolves the HJ.

The protein localises to the cytoplasm. Its function is as follows. The RuvA-RuvB-RuvC complex processes Holliday junction (HJ) DNA during genetic recombination and DNA repair, while the RuvA-RuvB complex plays an important role in the rescue of blocked DNA replication forks via replication fork reversal (RFR). RuvA specifically binds to HJ cruciform DNA, conferring on it an open structure. The RuvB hexamer acts as an ATP-dependent pump, pulling dsDNA into and through the RuvAB complex. HJ branch migration allows RuvC to scan DNA until it finds its consensus sequence, where it cleaves and resolves the cruciform DNA. The chain is Holliday junction branch migration complex subunit RuvA from Haemophilus influenzae (strain PittEE).